An 84-amino-acid polypeptide reads, in one-letter code: CDC42 small effector protein 2-A (84 aa).

2 S-palmitoyl cysteine lipidation sites follow: Cys-10 and Cys-11. In terms of domain architecture, CRIB spans 29 to 42 (IGEPTNFVHTAHVG).

Belongs to the CDC42SE/SPEC family.

The protein localises to the cytoplasm. The protein resides in the cytoskeleton. It localises to the cell membrane. Probably involved in the organization of the actin cytoskeleton by acting downstream of CDC42, inducing actin filament assembly. The chain is CDC42 small effector protein 2-A (cdc42se2-A) from Xenopus tropicalis (Western clawed frog).